Consider the following 224-residue polypeptide: MDSWNMKGSKMVDVNEITKYLPGFNCGACGYKRCDLFAEALLNKDVKLEDCPFLLRERFKENYEKLKEILKIKGKIKKEEKYIGVIDGYEADFLLKPLPNECSCRETLLIMDKKELKVGDYIRYRPLGCPIPHFAKIIDEYHGFYIIHVVGPSHRITGEKIEYKDVGIAIVVAFEGIVEGKVPEVGKTVKFIPKHCMMQKVHSGVVVQVEGKRVYIEGIDLKVF.

Residues 9 to 68 (SKMVDVNEITKYLPGFNCGACGYKRCDLFAEALLNKDVKLEDCPFLLRERFKENYEKLKE) enclose the 4Fe-4S domain. [4Fe-4S] cluster is bound by residues C26, C29, C34, and C51.

The cofactor is [4Fe-4S] cluster.

This is an uncharacterized protein from Methanocaldococcus jannaschii (strain ATCC 43067 / DSM 2661 / JAL-1 / JCM 10045 / NBRC 100440) (Methanococcus jannaschii).